The primary structure comprises 89 residues: Small ribosomal subunit protein uS15 (89 aa).

The protein belongs to the universal ribosomal protein uS15 family. As to quaternary structure, part of the 30S ribosomal subunit. Forms a bridge to the 50S subunit in the 70S ribosome, contacting the 23S rRNA.

Its function is as follows. One of the primary rRNA binding proteins, it binds directly to 16S rRNA where it helps nucleate assembly of the platform of the 30S subunit by binding and bridging several RNA helices of the 16S rRNA. Functionally, forms an intersubunit bridge (bridge B4) with the 23S rRNA of the 50S subunit in the ribosome. This is Small ribosomal subunit protein uS15 from Gloeobacter violaceus (strain ATCC 29082 / PCC 7421).